Here is a 315-residue protein sequence, read N- to C-terminus: 2,3-dihydroxyphenylpropionate/2,3-dihydroxicinnamic acid 1,2-dioxygenase (315 aa).

H118 functions as the Proton donor in the catalytic mechanism. H182 serves as the catalytic Proton acceptor.

The protein belongs to the LigB/MhpB extradiol dioxygenase family. In terms of assembly, homotetramer. Fe(2+) serves as cofactor.

The enzyme catalyses 3-(2,3-dihydroxyphenyl)propanoate + O2 = (2Z,4E)-2-hydroxy-6-oxonona-2,4-dienedioate + H(+). It catalyses the reaction (2E)-3-(2,3-dihydroxyphenyl)prop-2-enoate + O2 = (2Z,4E,7E)-2-hydroxy-6-oxonona-2,4,7-trienedioate + H(+). It participates in aromatic compound metabolism; 3-phenylpropanoate degradation. Its function is as follows. Catalyzes the non-heme iron(II)-dependent oxidative cleavage of 2,3-dihydroxyphenylpropionic acid and 2,3-dihydroxicinnamic acid into 2-hydroxy-6-ketononadienedioate and 2-hydroxy-6-ketononatrienedioate, respectively. The chain is 2,3-dihydroxyphenylpropionate/2,3-dihydroxicinnamic acid 1,2-dioxygenase from Mycolicibacterium gilvum (strain PYR-GCK) (Mycobacterium gilvum (strain PYR-GCK)).